The chain runs to 281 residues: ATP phosphoribosyltransferase (281 aa).

The protein belongs to the ATP phosphoribosyltransferase family. Long subfamily. The cofactor is Mg(2+).

It localises to the cytoplasm. The enzyme catalyses 1-(5-phospho-beta-D-ribosyl)-ATP + diphosphate = 5-phospho-alpha-D-ribose 1-diphosphate + ATP. It participates in amino-acid biosynthesis; L-histidine biosynthesis; L-histidine from 5-phospho-alpha-D-ribose 1-diphosphate: step 1/9. With respect to regulation, feedback inhibited by histidine. Its function is as follows. Catalyzes the condensation of ATP and 5-phosphoribose 1-diphosphate to form N'-(5'-phosphoribosyl)-ATP (PR-ATP). Has a crucial role in the pathway because the rate of histidine biosynthesis seems to be controlled primarily by regulation of HisG enzymatic activity. The sequence is that of ATP phosphoribosyltransferase from Kocuria rhizophila (strain ATCC 9341 / DSM 348 / NBRC 103217 / DC2201).